An 887-amino-acid chain; its full sequence is Probable LRR receptor-like serine/threonine-protein kinase At5g59680 (887 aa).

Residues 1 to 23 form the signal peptide; it reads MERSLELLLLLIRTLAIIHISQA. Over 25–510 the chain is Extracellular; the sequence is SQQGFISLDC…TKSGKSFPVT (486 aa). N-linked (GlcNAc...) asparagine glycans are attached at residues Asn143, Asn230, Asn256, Asn289, Asn338, Asn363, Asn400, Asn416, Asn432, Asn445, Asn464, and Asn471. LRR repeat units lie at residues 411–434, 435–457, and 459–481; these read RITTLNLSSSGLTGTITAAIQNLT, TLEKLDLSNNNLTGEVPEFLSNM, and SLLVINLSGNDLNGTIPQSLQRK. The chain crosses the membrane as a helical span at residues 511–531; sequence IVASVGSAAILIVVLVLVLFL. Residues 532 to 887 lie on the Cytoplasmic side of the membrane; that stretch reads RKKKPSAVEV…FDAEMIPRAR (356 aa). A Phosphothreonine modification is found at Thr571. Residues 580–853 form the Protein kinase domain; that stretch reads NNFGRVVGEG…HVVIELKECL (274 aa). ATP contacts are provided by residues 586-594 and Lys608; that span reads VGEGGFGVV. Tyr653 carries the phosphotyrosine modification. Asp705 acts as the Proton acceptor in catalysis. Residue Ser739 is modified to Phosphoserine. Residues Thr740 and Thr745 each carry the phosphothreonine modification. A Phosphotyrosine modification is found at Tyr753.

It belongs to the protein kinase superfamily. Ser/Thr protein kinase family.

It localises to the membrane. The catalysed reaction is L-seryl-[protein] + ATP = O-phospho-L-seryl-[protein] + ADP + H(+). The enzyme catalyses L-threonyl-[protein] + ATP = O-phospho-L-threonyl-[protein] + ADP + H(+). The sequence is that of Probable LRR receptor-like serine/threonine-protein kinase At5g59680 from Arabidopsis thaliana (Mouse-ear cress).